The primary structure comprises 419 residues: Light-dependent chlorophyll f synthase (419 aa).

5 consecutive transmembrane segments (helical) span residues 73 to 90, 162 to 177, 186 to 200, 241 to 262, and 323 to 337; these read YIGWFGMLAIPTLATAAI, HFIIGIISYQDREWEL, WISLAFTAPVAASVS, LHQMGVIGVLGGALLCAVHGSL, and CLAALPVAGIWSAAI. H162 is an a chlorophyll binding site. An a chlorophyll-binding site is contributed by H242.

This sequence belongs to the reaction center PufL/M/PsbA/D family. As to quaternary structure, homodimer.

It localises to the cellular thylakoid membrane. Functionally, synthesizes chlorophyll f or chlorophyllide f (Chl f, 2-formyl chlorophyll a), probably by oxidation of chlorophyll a or chlorophyllide a and reduction of plastoquinone. The reaction is probably light-dependent. Chl f absorbs far red light (FRL, 707 nm in 100% methanol), and is synthesized when cells are grown in FRL, where it provides the advantage of extending the spectral range of harvested light in terrestrial cyanobacteria. Chl f synthesis is probably light-dependent. This Synechococcus sp. (strain ATCC 29403 / PCC 7335) protein is Light-dependent chlorophyll f synthase.